Reading from the N-terminus, the 235-residue chain is Large ribosomal subunit protein uL1 (235 aa).

Belongs to the universal ribosomal protein uL1 family. Part of the 50S ribosomal subunit.

Functionally, binds directly to 23S rRNA. The L1 stalk is quite mobile in the ribosome, and is involved in E site tRNA release. Protein L1 is also a translational repressor protein, it controls the translation of the L11 operon by binding to its mRNA. The chain is Large ribosomal subunit protein uL1 from Prochlorococcus marinus (strain MIT 9215).